The following is a 386-amino-acid chain: F420 non-reducing hydrogenase II small subunit (386 aa).

The tat-type signal signal peptide spans 1-51 (MVEMSTGMKNLTRTLESMDFLKMDRRTFMKAVSALGATAFLGTYQTEIVNA). [4Fe-4S] cluster-binding residues include Cys67, Cys70, Cys178, Cys227, His273, Cys276, Cys296, and Cys302. Residues Cys311, Cys330, and Cys333 each coordinate [3Fe-4S] cluster.

Belongs to the [NiFe]/[NiFeSe] hydrogenase small subunit family. As to quaternary structure, composed of a large subunit (VhtA), a small subunit (VhtG) and a cytochrome subunit (VhtC). [4Fe-4S] cluster serves as cofactor. Requires [3Fe-4S] cluster as cofactor. In terms of processing, predicted to be exported by the Tat system. The position of the signal peptide cleavage has not been experimentally proven.

It localises to the cell membrane. The enzyme catalyses methanophenazine + H2 = dihydromethanophenazine. In terms of biological role, part of the F420 non-reducing hydrogenase II complex that catalyzes the reduction of methanophenazine to dihydromethanophenazine. The chain is F420 non-reducing hydrogenase II small subunit from Methanosarcina mazei (strain ATCC BAA-159 / DSM 3647 / Goe1 / Go1 / JCM 11833 / OCM 88) (Methanosarcina frisia).